The following is a 286-amino-acid chain: ATP synthase gamma chain (286 aa).

The protein belongs to the ATPase gamma chain family. In terms of assembly, F-type ATPases have 2 components, CF(1) - the catalytic core - and CF(0) - the membrane proton channel. CF(1) has five subunits: alpha(3), beta(3), gamma(1), delta(1), epsilon(1). CF(0) has three main subunits: a, b and c.

The protein localises to the cell inner membrane. Its function is as follows. Produces ATP from ADP in the presence of a proton gradient across the membrane. The gamma chain is believed to be important in regulating ATPase activity and the flow of protons through the CF(0) complex. In Pseudomonas entomophila (strain L48), this protein is ATP synthase gamma chain.